A 67-amino-acid chain; its full sequence is ATP synthase F(0) complex subunit 8 (67 aa).

Residues 8–24 (TWFINIVSMILTLFIVF) traverse the membrane as a helical segment. N6-acetyllysine; alternate is present on lysine 54. Lysine 54 bears the N6-succinyllysine; alternate mark. An N6-acetyllysine modification is found at lysine 57.

Belongs to the ATPase protein 8 family. In terms of assembly, component of the ATP synthase complex composed at least of ATP5F1A/subunit alpha, ATP5F1B/subunit beta, ATP5MC1/subunit c (homooctomer), MT-ATP6/subunit a, MT-ATP8/subunit 8, ATP5ME/subunit e, ATP5MF/subunit f, ATP5MG/subunit g, ATP5MK/subunit k, ATP5MJ/subunit j, ATP5F1C/subunit gamma, ATP5F1D/subunit delta, ATP5F1E/subunit epsilon, ATP5PF/subunit F6, ATP5PB/subunit b, ATP5PD/subunit d, ATP5PO/subunit OSCP. ATP synthase complex consists of a soluble F(1) head domain (subunits alpha(3) and beta(3)) - the catalytic core - and a membrane F(0) domain - the membrane proton channel (subunits c, a, 8, e, f, g, k and j). These two domains are linked by a central stalk (subunits gamma, delta, and epsilon) rotating inside the F1 region and a stationary peripheral stalk (subunits F6, b, d, and OSCP). Interacts with PRICKLE3.

The protein localises to the mitochondrion membrane. Functionally, subunit 8, of the mitochondrial membrane ATP synthase complex (F(1)F(0) ATP synthase or Complex V) that produces ATP from ADP in the presence of a proton gradient across the membrane which is generated by electron transport complexes of the respiratory chain. ATP synthase complex consist of a soluble F(1) head domain - the catalytic core - and a membrane F(1) domain - the membrane proton channel. These two domains are linked by a central stalk rotating inside the F(1) region and a stationary peripheral stalk. During catalysis, ATP synthesis in the catalytic domain of F(1) is coupled via a rotary mechanism of the central stalk subunits to proton translocation. In vivo, can only synthesize ATP although its ATP hydrolase activity can be activated artificially in vitro. Part of the complex F(0) domain. The chain is ATP synthase F(0) complex subunit 8 from Equus asinus (Donkey).